The sequence spans 529 residues: CTP synthase (529 aa).

The tract at residues 1–270 (MKYIVVTGGV…ADVVCSYLSL (270 aa)) is amidoligase domain. Ser-12 contributes to the CTP binding site. Ser-12 is a binding site for UTP. Residues 13–18 (GLGKGI) and Asp-70 contribute to the ATP site. Mg(2+) contacts are provided by Asp-70 and Glu-145. Residues 152 to 154 (DIE), 191 to 196 (KTKPTQ), and Lys-227 each bind CTP. UTP-binding positions include 191 to 196 (KTKPTQ) and Lys-227. 243 to 245 (KDA) contacts ATP. Residues 293–525 (VAIVSKYGIE…VEACKKNKSS (233 aa)) enclose the Glutamine amidotransferase type-1 domain. Gly-349 is a binding site for L-glutamine. The Nucleophile; for glutamine hydrolysis role is filled by Cys-376. L-glutamine is bound by residues 377–380 (LGFQ), Glu-400, and Arg-455. Residues His-498 and Glu-500 contribute to the active site.

This sequence belongs to the CTP synthase family. Homotetramer.

The enzyme catalyses UTP + L-glutamine + ATP + H2O = CTP + L-glutamate + ADP + phosphate + 2 H(+). It catalyses the reaction L-glutamine + H2O = L-glutamate + NH4(+). The catalysed reaction is UTP + NH4(+) + ATP = CTP + ADP + phosphate + 2 H(+). The protein operates within pyrimidine metabolism; CTP biosynthesis via de novo pathway; CTP from UDP: step 2/2. Its activity is regulated as follows. Allosterically activated by GTP, when glutamine is the substrate; GTP has no effect on the reaction when ammonia is the substrate. The allosteric effector GTP functions by stabilizing the protein conformation that binds the tetrahedral intermediate(s) formed during glutamine hydrolysis. Inhibited by the product CTP, via allosteric rather than competitive inhibition. Its function is as follows. Catalyzes the ATP-dependent amination of UTP to CTP with either L-glutamine or ammonia as the source of nitrogen. Regulates intracellular CTP levels through interactions with the four ribonucleotide triphosphates. This Methanoculleus marisnigri (strain ATCC 35101 / DSM 1498 / JR1) protein is CTP synthase.